A 716-amino-acid polypeptide reads, in one-letter code: MVSVKVNGNPQNRLVNNAKVNGNMAFRGNQNRNRNFGGGNNNYGGPMGANRMGGMNMSPWESQNPGGGQFGNNMRQGGGQMNAQAINLANNLLNNLFRNQNPPSLLDLPRGGGGMGNRNQRGGPMVSRGGGAGNRLNNRRGQGGGFQNRGATGSGPKPPPKQGGGGIRKQNAFDRAKKLLAKNANQNKKKEPTPGEKKIESPTKESPYASVPNDMFYCHLCKKHMWDANSFENHIKGRTHLMMREGIEESYRLKANMIRQEAKIAEQLKSIEFDRLKRMGKSKQRQLDYCTMCDLNFHGHISTHRKSEGHLQLKKFLHPKCIECNKEFATRIDYDTHLLSAEHLKKAAENNTKVGERKRQTLPISTEEEETRDLRLPQKRKKKPVKKEGEAADGEAKKEGAGDGEGAEGDEAEGEEAKEGEEAADETKEGDELNESQEEEEVALPVDPEDCILDFNDGDEIPSEVDTRLPKYNWQRAVGPGLISKLECYECSVCSKFFDTEVTAEIHSRTATHHRNFLKFINEKSSDTKIAQKRAAAALEENERKKRKVEEAEAPAAEGAAEETTEGAEGELYDPSEATGDDEDVEMVDDNAEGEGEGEGDEEAEAEVEEDGAGQDNGEEEMEAQEEEGQEGEQEPEPEPAPVQTPAPAEPAPPAKTPAKTPTKAAAPAAVASPAAAATSADASPSPAKKATPARAAAGAKATPQRQRARGRYNRY.

Disordered stretches follow at residues 103–168 (PSLL…GGIR) and 182–208 (KNANQNKKKEPTPGEKKIESPTKESPY). The span at 188-203 (KKKEPTPGEKKIESPT) shows a compositional bias: basic and acidic residues. Ser201 bears the Phosphoserine mark. Thr203 bears the Phosphothreonine mark. The residue at position 206 (Ser206) is a Phosphoserine. Residues 216–240 (FYCHLCKKHMWDANSFENHIKGRTH) form a C2H2-type 1 zinc finger. Residues 288 to 310 (DYCTMCDLNFHGHISTHRKSEGH) form a C2H2-type 2; atypical zinc finger. A C2H2-type 3 zinc finger spans residues 319-343 (PKCIECNKEFATRIDYDTHLLSAEH). A compositionally biased stretch (basic and acidic residues) spans 350–359 (NNTKVGERKR). Residues 350–447 (NNTKVGERKR…EEEEVALPVD (98 aa)) form a disordered region. Positions 379 to 383 (KRKKK) match the Nuclear localization signal motif. Basic and acidic residues predominate over residues 386–401 (KKEGEAADGEAKKEGA). Over residues 405–414 (EGAEGDEAEG) the composition is skewed to acidic residues. Residues 415–431 (EEAKEGEEAADETKEGD) show a composition bias toward basic and acidic residues. Residues 432–447 (ELNESQEEEEVALPVD) show a composition bias toward acidic residues. The C2H2-type 4 zinc finger occupies 489 to 513 (YECSVCSKFFDTEVTAEIHSRTATH). Residues 534-716 (RAAAALEENE…QRARGRYNRY (183 aa)) are disordered. Residues 541-551 (ENERKKRKVEE) show a composition bias toward basic and acidic residues. Residues 544-548 (RKKRK) carry the Nuclear localization signal motif. Residues 560–638 (AAEETTEGAE…GQEGEQEPEP (79 aa)) are compositionally biased toward acidic residues. Residues 639–656 (EPAPVQTPAPAEPAPPAK) show a composition bias toward pro residues. A compositionally biased stretch (low complexity) spans 657–704 (TPAKTPTKAAAPAAVASPAAAATSADASPSPAKKATPARAAAGAKATP). Ser673, Ser684, and Ser686 each carry phosphoserine. Thr692 is subject to Phosphothreonine. Positions 707–716 (QRARGRYNRY) are enriched in basic residues.

The protein resides in the nucleus. Its subcellular location is the chromosome. May play a role in the process of early and late gene activation, or possibly in RNA processing, for a defined set of developmentally regulated loci. In Drosophila melanogaster (Fruit fly), this protein is Zinc finger protein on ecdysone puffs (Pep).